The primary structure comprises 527 residues: DNA damage-binding protein cmr1 (527 aa).

The tract at residues 35–90 is disordered; that stretch reads AGLFPPKSARSSPGGLTKPKKKPAPKKVKKEDEDLVPRRMSSRLRGLAADSEVAKR. Basic residues predominate over residues 52–62; that stretch reads KPKKKPAPKKV. WD repeat units follow at residues 185-226, 249-289, 296-336, 341-381, 388-427, 450-493, and 496-527; these read LTPE…PISA, PHTR…SVEK, SDDI…RSAV, LSEK…HDEP, VSRL…AAWK, GRWV…LAQL, and DGIT…CLWM. The interval 284–303 is disordered; sequence TTSVEKYAPESTSDDIPISG.

The protein belongs to the WD repeat DDB2/WDR76 family.

In terms of biological role, DNA-binding protein that binds to both single- and double-stranded DNA. Binds preferentially to UV-damaged DNA. May be involved in DNA-metabolic processes. The protein is DNA damage-binding protein cmr1 of Neosartorya fischeri (strain ATCC 1020 / DSM 3700 / CBS 544.65 / FGSC A1164 / JCM 1740 / NRRL 181 / WB 181) (Aspergillus fischerianus).